A 410-amino-acid polypeptide reads, in one-letter code: Tegument protein VP16 homolog (410 aa).

The tract at residues 388-410 (PPSPSEILPGDPPRPPTCGFLTR) is disordered.

Belongs to the herpesviridae tegument protein VP16 protein family. In terms of assembly, associates with the VP16-induced complex; binding to host HCFC1 activates VP16 for association with the octamer motif-binding host protein POU2F1, to form a multiprotein-DNA complex responsible for activating transcription of the viral immediate early genes.

It is found in the virion tegument. The protein resides in the host nucleus. In terms of biological role, transcriptional activator of immediate-early (IE) gene products (alpha genes). Acts as a key activator of lytic infection by initiating the lytic program through the assembly of the transcriptional regulatory VP16-induced complex composed of VP16 and two cellular factors, HCFC1 and POU2F 1. VP16-induced complex represents a regulatory switch: when it is on, it promotes IE-gene expression and thus lytic infection, and when it is off, it limits IE-gene transcription favoring latent infection. Functionally, may play a role in the aggregation of tegument proteins around nucleocapsids during virus morphogenesis. This is Tegument protein VP16 homolog from Varicella-zoster virus (strain Oka vaccine) (HHV-3).